The primary structure comprises 258 residues: Acyl-[acyl-carrier-protein]--UDP-N-acetylglucosamine O-acyltransferase (258 aa).

Belongs to the transferase hexapeptide repeat family. LpxA subfamily. Homotrimer.

It is found in the cytoplasm. The catalysed reaction is a (3R)-hydroxyacyl-[ACP] + UDP-N-acetyl-alpha-D-glucosamine = a UDP-3-O-[(3R)-3-hydroxyacyl]-N-acetyl-alpha-D-glucosamine + holo-[ACP]. The protein operates within glycolipid biosynthesis; lipid IV(A) biosynthesis; lipid IV(A) from (3R)-3-hydroxytetradecanoyl-[acyl-carrier-protein] and UDP-N-acetyl-alpha-D-glucosamine: step 1/6. In terms of biological role, involved in the biosynthesis of lipid A, a phosphorylated glycolipid that anchors the lipopolysaccharide to the outer membrane of the cell. The protein is Acyl-[acyl-carrier-protein]--UDP-N-acetylglucosamine O-acyltransferase of Saccharophagus degradans (strain 2-40 / ATCC 43961 / DSM 17024).